A 991-amino-acid chain; its full sequence is Valine--tRNA ligase (991 aa).

The 'HIGH' region motif lies at 43–53 (PNVTGTLHMGH). A 'KMSKS' region motif is present at residues 582 to 586 (KMSKS). Lysine 585 is a binding site for ATP. Residues 689-711 (AHSPAQHQAGQDGQDAPRTPQPR) form a disordered region. Over residues 693–704 (AQHQAGQDGQDA) the composition is skewed to low complexity. Residues 925–988 (LIDVDAERAR…TQLNGLRERR (64 aa)) adopt a coiled-coil conformation.

This sequence belongs to the class-I aminoacyl-tRNA synthetase family. ValS type 1 subfamily. Monomer.

The protein resides in the cytoplasm. It catalyses the reaction tRNA(Val) + L-valine + ATP = L-valyl-tRNA(Val) + AMP + diphosphate. Catalyzes the attachment of valine to tRNA(Val). As ValRS can inadvertently accommodate and process structurally similar amino acids such as threonine, to avoid such errors, it has a 'posttransfer' editing activity that hydrolyzes mischarged Thr-tRNA(Val) in a tRNA-dependent manner. The sequence is that of Valine--tRNA ligase from Xylella fastidiosa (strain M12).